The sequence spans 297 residues: Homoserine kinase (297 aa).

82 to 92 (PLTRGLGSSAS) is an ATP binding site.

The protein belongs to the GHMP kinase family. Homoserine kinase subfamily.

The protein localises to the cytoplasm. The enzyme catalyses L-homoserine + ATP = O-phospho-L-homoserine + ADP + H(+). Its pathway is amino-acid biosynthesis; L-threonine biosynthesis; L-threonine from L-aspartate: step 4/5. Functionally, catalyzes the ATP-dependent phosphorylation of L-homoserine to L-homoserine phosphate. The protein is Homoserine kinase of Bacillus thuringiensis (strain Al Hakam).